Reading from the N-terminus, the 868-residue chain is V-set and immunoglobulin domain-containing protein 10-like (868 aa).

The first 27 residues, Met-1–Gly-27, serve as a signal peptide directing secretion. Low complexity predominate over residues Leu-26–Ser-52. The tract at residues Leu-26–Pro-82 is disordered. At Ser-28 to Ala-763 the chain is on the extracellular side. N-linked (GlcNAc...) asparagine glycans are attached at residues Asn-48, Asn-77, and Asn-88. The segment covering Arg-71–His-80 has biased composition (polar residues). Disordered regions lie at residues Leu-96–Lys-154 and Trp-323–Arg-342. Polar residues-rich tracts occupy residues Asp-99 to Ser-108 and Pro-133 to Asp-143. Ig-like C2-type domains lie at Pro-289 to Ser-381 and Pro-389 to Asn-474. A disulfide bond links Cys-311 and Cys-365. An N-linked (GlcNAc...) asparagine glycan is attached at Asn-410. Residues Cys-415 and Cys-458 are joined by a disulfide bond. 3 N-linked (GlcNAc...) asparagine glycosylation sites follow: Asn-474, Asn-628, and Asn-637. A helical membrane pass occupies residues Ile-764–Leu-784. The Cytoplasmic portion of the chain corresponds to Cys-785 to Val-868.

It is found in the membrane. This is V-set and immunoglobulin domain-containing protein 10-like (Vsig10l) from Mus musculus (Mouse).